We begin with the raw amino-acid sequence, 534 residues long: Nuclear polyadenylated RNA-binding protein 4 (534 aa).

The disordered stretch occupies residues 1 to 154; that stretch reads MSSDEEDFND…TKEERSKADL (154 aa). Residues Ser-2 and Ser-3 each carry the phosphoserine modification. The span at 13–30 shows a compositional bias: basic and acidic residues; sequence GDDKPTTTEEVKKEEEQN. The span at 37–78 shows a compositional bias: low complexity; it reads SQLDQLAALQALSSSLNKLNNPNSNNSSSNNSNQDTSSSKQD. A phosphoserine mark is found at Ser-51 and Ser-87. Residues 81 to 98 are compositionally biased toward basic and acidic residues; the sequence is ANDKEGSNEDTKNEKKQE. 2 stretches are compositionally biased toward low complexity: residues 99–112 and 121–144; these read SATS…ASSA and QLQQ…QVTQ. The span at 145–154 shows a compositional bias: basic and acidic residues; it reads TKEERSKADL. RRM domains lie at 159-241 and 243-320; these read CKMF…EQDK and GKIF…RAEP. Phosphoserine is present on Ser-206. Disordered regions lie at residues 316–354 and 415–534; these read KRAE…DFNQ and MPPN…PYNR. Low complexity predominate over residues 336–354; it reads GNNMNRRGGNFGNQGDFNQ. Residues 420-459 show a composition bias toward polar residues; it reads MTLNQPQQDSNATQGSPAPSDSDNNKSNDVQTIGNTSNTD. Thr-458 carries the phosphothreonine modification. 2 positions are modified to phosphoserine: Ser-460 and Ser-462. Positions 460–475 are enriched in low complexity; it reads SGSPPLNLPNGPKGPS. Residues 478–505 show a composition bias toward basic and acidic residues; the sequence is NDDHNSGYGYNRDRGDRDRNDRDRDYNH. Arg-519 bears the Omega-N-methylarginine mark. A compositionally biased stretch (low complexity) spans 523 to 534; the sequence is NRRNNGYHPYNR.

Interacts with NAM7. Methylated by HMT1. The methylation is required for nuclear export.

The protein resides in the cytoplasm. Its subcellular location is the nucleus. It localises to the stress granule. Its function is as follows. RNA-binding protein, which is involved in the polyadenylation-dependent pre-mRNA 3'-end formation and cooperates with the cleavage factor CFIA complex and the cleavage and polyadenylation factor (CPF) complex. May be involved in regulation of poly(A) site selection. Is involved in nonsense-mediated mRNA decay. Seems to bind to an RNA downstream sequence element (DSE) located 3' of a nonsense codon and may mark the transcript for decay. In Saccharomyces cerevisiae (strain ATCC 204508 / S288c) (Baker's yeast), this protein is Nuclear polyadenylated RNA-binding protein 4.